The chain runs to 218 residues: Ribose-5-phosphate isomerase A (218 aa).

Substrate is bound by residues 28-31 (TGST), 81-84 (DGAD), and 94-97 (KGGG). Catalysis depends on Glu103, which acts as the Proton acceptor. Lys121 provides a ligand contact to substrate.

Belongs to the ribose 5-phosphate isomerase family. Homodimer.

The catalysed reaction is aldehydo-D-ribose 5-phosphate = D-ribulose 5-phosphate. Its pathway is carbohydrate degradation; pentose phosphate pathway; D-ribose 5-phosphate from D-ribulose 5-phosphate (non-oxidative stage): step 1/1. Catalyzes the reversible conversion of ribose-5-phosphate to ribulose 5-phosphate. The polypeptide is Ribose-5-phosphate isomerase A (Yersinia pseudotuberculosis serotype IB (strain PB1/+)).